A 244-amino-acid chain; its full sequence is 1-(5-phosphoribosyl)-5-[(5-phosphoribosylamino)methylideneamino] imidazole-4-carboxamide isomerase (244 aa).

The active-site Proton acceptor is the Asp9. Residue Asp131 is the Proton donor of the active site.

Belongs to the HisA/HisF family.

Its subcellular location is the cytoplasm. It carries out the reaction 1-(5-phospho-beta-D-ribosyl)-5-[(5-phospho-beta-D-ribosylamino)methylideneamino]imidazole-4-carboxamide = 5-[(5-phospho-1-deoxy-D-ribulos-1-ylimino)methylamino]-1-(5-phospho-beta-D-ribosyl)imidazole-4-carboxamide. It participates in amino-acid biosynthesis; L-histidine biosynthesis; L-histidine from 5-phospho-alpha-D-ribose 1-diphosphate: step 4/9. This is 1-(5-phosphoribosyl)-5-[(5-phosphoribosylamino)methylideneamino] imidazole-4-carboxamide isomerase from Campylobacter jejuni subsp. doylei (strain ATCC BAA-1458 / RM4099 / 269.97).